The sequence spans 338 residues: Glyceraldehyde-3-phosphate dehydrogenase 2 (338 aa).

NAD(+) is bound by residues 13-14 (RI), Asp35, and Arg80. Residues 151 to 153 (SCT), Thr182, 211 to 212 (TG), and Arg234 contribute to the D-glyceraldehyde 3-phosphate site. Catalysis depends on Cys152, which acts as the Nucleophile. Position 316 (Asn316) interacts with NAD(+).

The protein belongs to the glyceraldehyde-3-phosphate dehydrogenase family. As to quaternary structure, homotetramer.

The protein resides in the cytoplasm. The enzyme catalyses D-glyceraldehyde 3-phosphate + phosphate + NAD(+) = (2R)-3-phospho-glyceroyl phosphate + NADH + H(+). It participates in carbohydrate degradation; glycolysis; pyruvate from D-glyceraldehyde 3-phosphate: step 1/5. Its activity is regulated as follows. Inhibited by koningic acid through the interaction of cysteine residues with koningic acid even at very low concentrations. This is Glyceraldehyde-3-phosphate dehydrogenase 2 (gpd2) from Trichoderma koningii (Hypocrea koningii).